We begin with the raw amino-acid sequence, 174 residues long: Pectinesterase inhibitor 12 (174 aa).

The signal sequence occupies residues 1–20 (MKFLVSLVIFSLFLNGFATA). Disulfide bonds link C28/C43 and C100/C140. N-linked (GlcNAc...) asparagine glycosylation occurs at N129.

Belongs to the PMEI family.

It is found in the secreted. Its subcellular location is the extracellular space. The protein resides in the apoplast. Pectin methylesterase (PME) inhibitor involved in the maintenance of cell wall integrity in response to necrotrophic pathogens. Modulates PME activity and pectin methylesterification during infection by Botrytis cinerea and contributes to resistance against the pathogen. The polypeptide is Pectinesterase inhibitor 12 (Arabidopsis thaliana (Mouse-ear cress)).